We begin with the raw amino-acid sequence, 71 residues long: Antitoxin ParD2 (71 aa).

In terms of biological role, antitoxin component of a type II toxin-antitoxin (TA) system. This Mycobacterium tuberculosis (strain CDC 1551 / Oshkosh) protein is Antitoxin ParD2 (parD2).